The following is a 289-amino-acid chain: Bis(5'-nucleosyl)-tetraphosphatase, symmetrical (289 aa).

This sequence belongs to the Ap4A hydrolase family.

The enzyme catalyses P(1),P(4)-bis(5'-adenosyl) tetraphosphate + H2O = 2 ADP + 2 H(+). In terms of biological role, hydrolyzes diadenosine 5',5'''-P1,P4-tetraphosphate to yield ADP. The sequence is that of Bis(5'-nucleosyl)-tetraphosphatase, symmetrical from Yersinia pseudotuberculosis serotype O:1b (strain IP 31758).